Reading from the N-terminus, the 419-residue chain is Inner ear-specific collagen (419 aa).

A signal peptide spans 1 to 19 (MDAYSLSPTDSTTYSSDTF). The nonhelical region (NC2) stretch occupies residues 20 to 57 (STEFHTDAIAPPGNTPGNYTLDYNECFFNFCECCPPEK). Asn37 carries N-linked (GlcNAc...) asparagine glycosylation. The segment at 58–274 (GPMGPMGERG…RGPKGPPGES (217 aa)) is triple-helical region (COL1). Residues 63–275 (MGERGLPGPP…GPKGPPGESV (213 aa)) form a disordered region. Composition is skewed to basic and acidic residues over residues 129–144 (PGEK…KGER) and 184–202 (LKGE…KGER). Residues 227–236 (GPLGGKGDTG) are compositionally biased toward gly residues. A C1q domain is found at 275–412 (VEQIRSAFSV…GFLLYPDTKK (138 aa)). Positions 275-419 (VEQIRSAFSV…TKKPTAMENL (145 aa)) are nonhelical region (NC1). Residue Asn320 is glycosylated (N-linked (GlcNAc...) asparagine).

Specialized secretory supporting cells at the outer perimeter of the saccular epithelium.

Its subcellular location is the secreted. It is found in the extracellular space. The protein localises to the extracellular matrix. Functionally, forms a microstructural matrix within the otolithic membrane. In Lepomis macrochirus (Bluegill), this protein is Inner ear-specific collagen.